The sequence spans 273 residues: NH(3)-dependent NAD(+) synthetase (273 aa).

45–52 (GISGGQDS) serves as a coordination point for ATP. Residue Asp51 coordinates Mg(2+). Arg139 provides a ligand contact to deamido-NAD(+). Thr159 contributes to the ATP binding site. Glu164 is a Mg(2+) binding site. Deamido-NAD(+) is bound by residues Lys172 and Asp179. ATP contacts are provided by Lys188 and Thr210. 259-260 (HK) is a binding site for deamido-NAD(+).

The protein belongs to the NAD synthetase family. As to quaternary structure, homodimer.

It carries out the reaction deamido-NAD(+) + NH4(+) + ATP = AMP + diphosphate + NAD(+) + H(+). The protein operates within cofactor biosynthesis; NAD(+) biosynthesis; NAD(+) from deamido-NAD(+) (ammonia route): step 1/1. Its function is as follows. Catalyzes the ATP-dependent amidation of deamido-NAD to form NAD. Uses ammonia as a nitrogen source. The polypeptide is NH(3)-dependent NAD(+) synthetase (Bacillus pumilus (strain SAFR-032)).